A 547-amino-acid chain; its full sequence is MPDSSLVLVAIAGAAYIFWLVFHRYLVRSPLDNLPSPPSSPFLGNLPDIIHRQSHLWWRHVSNTYGPATKLTAFFGIQMLYTFDPKAMYSILVKDTELYPKKTAAYDDFTLFIGPGLLFAEGAQHRRQRKWLNPVFSVAQLRDVSHVFYGVAYKLEEAIRNRVGAQSQNLDVNGWMARTTLEMLGQAGLGYSFDKFTEDSTDSYGEALKSFFPVINHVPLLNLFVMTLANHIPKWLMRRVLRLAVPFPHVLRLLRISETMQKRSSEIIQQKKTALQKGDKALIHQVGEGKDIMSVLLKSNMNAPSDSEKLPDEELLAQMSTFILAGMDTTSNALSRILHLLAEHPDVQEKLRHELSEAREIVGNGKDVPYDDLVKLPYLDAVCRETLRLHPPLNLIGRRAAKDMVVPLSSPVRGRDGTLVNEVTLPKDTFVLLGLQACNTNKKLWGEDAYEWKPERWLQPLPSMLEEARVPGVYSNLMSFSGGVRSCIGFKFSQLEMKVLLTILLPAFSFELTEKPIFWNTSAVSYPTMDKDSTRPEMLLKVKALAC.

Residues 2–22 (PDSSLVLVAIAGAAYIFWLVF) form a helical membrane-spanning segment. Cys487 provides a ligand contact to heme.

Belongs to the cytochrome P450 family. Heme is required as a cofactor.

The protein resides in the membrane. It carries out the reaction lanosterol + reduced [NADPH--hemoprotein reductase] + O2 = 26-hydroxylanosterol + oxidized [NADPH--hemoprotein reductase] + H2O + H(+). The catalysed reaction is 26-hydroxylanosterol + reduced [NADPH--hemoprotein reductase] + O2 = 26-oxolanosterol + oxidized [NADPH--hemoprotein reductase] + 2 H2O + H(+). The enzyme catalyses 26-oxolanosterol + reduced [NADPH--hemoprotein reductase] + O2 = 3beta-hydroxy-lanosta-8, 24-dien-26-oate + oxidized [NADPH--hemoprotein reductase] + H2O + 2 H(+). Its pathway is secondary metabolite biosynthesis; terpenoid biosynthesis. Functionally, cytochrome P450 monooxygenase that is involved in the biosynthesis of ganoderic acids (GA), a group of highly oxygenated lanostane-type triterpenoids which well recognized as a main group of unique bioactive compounds in the medicinal mushroom Ganoderma lucidum. CYP5150L8 alone is able to catalyze the three-step oxidations at C-26 from lanosterol to 3-hydroxy-lanosta-8,24-dien-26-oic acid (also called ganoderic acid Z or HLDOA). The methyl group of lanosterol at C-26 is first oxidized into hydroxyl group to form 3-hydroxy-lanosta-8,24-dien-26-ol (HLDO). The hydroxyl group at C-26 of HLDO is further converted into a formyl group to form 3-hydroxy-lanosta-8,24-dien-26-al (HLDA). Finally, the formyl group is oxidized into a carboxyl group to produce 3-hydroxy-lanosta-8,24-dien-26-oic acid (HLDOA). This Ganoderma lucidum (Ling zhi medicinal fungus) protein is Ganoderic acid synthetase CYP5150L8.